The primary structure comprises 820 residues: Pentatricopeptide repeat-containing protein At3g22150, chloroplastic (820 aa).

Residues 1–42 (MAGSALPLPPPPPLSLQSPSQNQTRHSSTFSPPTLTPQTPSI) form a disordered region. Residues 1-50 (MAGSALPLPPPPPLSLQSPSQNQTRHSSTFSPPTLTPQTPSIRSRLSKIC) constitute a chloroplast transit peptide. Positions 22–42 (NQTRHSSTFSPPTLTPQTPSI) are enriched in polar residues. 17 PPR repeats span residues 69–99 (TTVLWNTIIIGFICNNLPHEALLFYSRMKKT), 106–136 (DAYTYSSTLKACAETKNLKAGKAVHCHLIRC), 141–177 (SRVVHNSLMNMYVSCLNAPDCFEYDVVRKVFDNMRRK), 178–212 (NVVAWNTLISWYVKTGRNAEACRQFGIMMRMEVKP), 213–247 (SPVSFVNVFPAVSISRSIKKANVFYGLMLKLGDEY), 250–284 (DLFVVSSAISMYAELGDIESSRRVFDSCVERNIEV), 285–316 (WNTMIGVYVQNDCLVESIELFLEAIGSKEIVS), 317–347 (DEVTYLLAASAVSALQQVELGRQFHGFVSKN), 352–382 (PIVIVNSLMVMYSRCGSVHKSFGVFLSMRER), 383–417 (DVVSWNTMISAFVQNGLDDEGLMLVYEMQKQGFKI), 418–452 (DYITVTALLSAASNLRNKEIGKQTHAFLIRQGIQF), 485–519 (DQATWNSMISGYTQNGHTEKTFLVFRKMLEQNIRP), 520–550 (NAVTVASILPACSQIGSVDLGKQLHGFSIRQ), 555–585 (NVFVASALVDMYSKAGAIKYAEDMFSQTKER), 586–620 (NSVTYTTMILGYGQHGMGERAISLFLSMQESGIKP), 621–651 (DAITFVAVLSACSYSGLIDEGLKIFEEMREV), and 657–691 (SSEHYCCITDMLGRVGRVNEAYEFVKGLGEEGNIA). Positions 693–770 (LWGSLLGSCK…EVGRSGIEIA (78 aa)) are type E motif. A type E(+) motif region spans residues 771–801 (GYVNCFVSRDQEHPHSSEIYDVIDGLAKDMR).

The protein belongs to the PPR family. PCMP-E subfamily.

The protein resides in the plastid. It localises to the chloroplast. This is Pentatricopeptide repeat-containing protein At3g22150, chloroplastic (PCMP-E95) from Arabidopsis thaliana (Mouse-ear cress).